The following is a 456-amino-acid chain: Bifunctional protein GlmU (456 aa).

The tract at residues 1 to 229 is pyrophosphorylase; it reads MLNNAMSVVI…LSEVEGVNNR (229 aa). UDP-N-acetyl-alpha-D-glucosamine-binding positions include 11–14, Lys25, Gln76, 81–82, 103–105, Gly140, Glu154, Asn169, and Asn227; these read LAAG, GT, and YGD. Residue Asp105 participates in Mg(2+) binding. A Mg(2+)-binding site is contributed by Asn227. A linker region spans residues 230-250; sequence LQLSRLERVYQSEQAEKLLLA. The N-acetyltransferase stretch occupies residues 251 to 456; the sequence is GVMLRDPARF…EGWRRPVKKK (206 aa). UDP-N-acetyl-alpha-D-glucosamine contacts are provided by Arg333 and Lys351. His363 acts as the Proton acceptor in catalysis. UDP-N-acetyl-alpha-D-glucosamine contacts are provided by Tyr366 and Asn377. Residues Ala380, 386–387, Ser405, Ala423, and Arg440 each bind acetyl-CoA; that span reads NY.

In the N-terminal section; belongs to the N-acetylglucosamine-1-phosphate uridyltransferase family. The protein in the C-terminal section; belongs to the transferase hexapeptide repeat family. In terms of assembly, homotrimer. Mg(2+) is required as a cofactor.

It is found in the cytoplasm. It carries out the reaction alpha-D-glucosamine 1-phosphate + acetyl-CoA = N-acetyl-alpha-D-glucosamine 1-phosphate + CoA + H(+). It catalyses the reaction N-acetyl-alpha-D-glucosamine 1-phosphate + UTP + H(+) = UDP-N-acetyl-alpha-D-glucosamine + diphosphate. It functions in the pathway nucleotide-sugar biosynthesis; UDP-N-acetyl-alpha-D-glucosamine biosynthesis; N-acetyl-alpha-D-glucosamine 1-phosphate from alpha-D-glucosamine 6-phosphate (route II): step 2/2. Its pathway is nucleotide-sugar biosynthesis; UDP-N-acetyl-alpha-D-glucosamine biosynthesis; UDP-N-acetyl-alpha-D-glucosamine from N-acetyl-alpha-D-glucosamine 1-phosphate: step 1/1. The protein operates within bacterial outer membrane biogenesis; LPS lipid A biosynthesis. Its function is as follows. Catalyzes the last two sequential reactions in the de novo biosynthetic pathway for UDP-N-acetylglucosamine (UDP-GlcNAc). The C-terminal domain catalyzes the transfer of acetyl group from acetyl coenzyme A to glucosamine-1-phosphate (GlcN-1-P) to produce N-acetylglucosamine-1-phosphate (GlcNAc-1-P), which is converted into UDP-GlcNAc by the transfer of uridine 5-monophosphate (from uridine 5-triphosphate), a reaction catalyzed by the N-terminal domain. This is Bifunctional protein GlmU from Escherichia coli O81 (strain ED1a).